Reading from the N-terminus, the 291-residue chain is ATP synthase gamma chain (291 aa).

The protein belongs to the ATPase gamma chain family. As to quaternary structure, F-type ATPases have 2 components, CF(1) - the catalytic core - and CF(0) - the membrane proton channel. CF(1) has five subunits: alpha(3), beta(3), gamma(1), delta(1), epsilon(1). CF(0) has three main subunits: a, b and c.

It is found in the cell inner membrane. Its function is as follows. Produces ATP from ADP in the presence of a proton gradient across the membrane. The gamma chain is believed to be important in regulating ATPase activity and the flow of protons through the CF(0) complex. The polypeptide is ATP synthase gamma chain (Caulobacter vibrioides (strain NA1000 / CB15N) (Caulobacter crescentus)).